Consider the following 381-residue polypeptide: N-acetyl-alpha-D-glucosaminyl L-malate synthase (381 aa).

S16, Y94, and T122 together coordinate (S)-malate. The UDP site is built by N206, Q262, and E290.

This sequence belongs to the glycosyltransferase group 1 family. Glycosyltransferase 4 subfamily. Dimer of tetramers.

The enzyme catalyses (S)-malate + UDP-N-acetyl-alpha-D-glucosamine = (S)-malyl N-acetyl-alpha-D-glucosaminide + UDP + H(+). Functionally, involved in bacillithiol (BSH) biosynthesis. Catalyzes the first step of the pathway, the formation of N-acetylglucosaminylmalate (GlcNAc-Mal) from UDP-N-acetylglucosamine (UDP-GlcNAc) and L-malate. The chain is N-acetyl-alpha-D-glucosaminyl L-malate synthase from Bacillus anthracis.